Reading from the N-terminus, the 293-residue chain is Nucleotide-binding protein BC_5156 (293 aa).

14-21 serves as a coordination point for ATP; the sequence is GMSGAGKT. 65-68 is a binding site for GTP; that stretch reads DLRG.

Belongs to the RapZ-like family.

Its function is as follows. Displays ATPase and GTPase activities. The sequence is that of Nucleotide-binding protein BC_5156 from Bacillus cereus (strain ATCC 14579 / DSM 31 / CCUG 7414 / JCM 2152 / NBRC 15305 / NCIMB 9373 / NCTC 2599 / NRRL B-3711).